Here is a 560-residue protein sequence, read N- to C-terminus: 2-succinyl-5-enolpyruvyl-6-hydroxy-3-cyclohexene-1-carboxylate synthase (560 aa).

It belongs to the TPP enzyme family. MenD subfamily. Homodimer. Mg(2+) is required as a cofactor. Requires Mn(2+) as cofactor. It depends on thiamine diphosphate as a cofactor.

The catalysed reaction is isochorismate + 2-oxoglutarate + H(+) = 5-enolpyruvoyl-6-hydroxy-2-succinyl-cyclohex-3-ene-1-carboxylate + CO2. It functions in the pathway quinol/quinone metabolism; 1,4-dihydroxy-2-naphthoate biosynthesis; 1,4-dihydroxy-2-naphthoate from chorismate: step 2/7. It participates in quinol/quinone metabolism; menaquinone biosynthesis. Functionally, catalyzes the thiamine diphosphate-dependent decarboxylation of 2-oxoglutarate and the subsequent addition of the resulting succinic semialdehyde-thiamine pyrophosphate anion to isochorismate to yield 2-succinyl-5-enolpyruvyl-6-hydroxy-3-cyclohexene-1-carboxylate (SEPHCHC). In Pectobacterium carotovorum subsp. carotovorum (strain PC1), this protein is 2-succinyl-5-enolpyruvyl-6-hydroxy-3-cyclohexene-1-carboxylate synthase.